The chain runs to 329 residues: Transcription factor MYB2 (329 aa).

2 consecutive HTH myb-type domains span residues 17 to 69 (GGDL…LNYL) and 70 to 124 (RPDL…QKHA). DNA-binding regions (H-T-H motif) lie at residues 45–69 (WNSL…LNYL) and 97–120 (WSKI…RTRV). Low complexity-rich tracts occupy residues 155-166 (AAAGQQQQQEGG) and 217-235 (LSST…GAGA). Disordered stretches follow at residues 155-189 (AAAG…PELP) and 206-242 (GAQS…WPTQ).

As to expression, highly expressed in leaves. Expressed in roots and shoots. Expressed at low levels in flowers.

It is found in the nucleus. Functionally, transcription factor involved in abiotic stress responses. Plays a regulatory role in tolerance to salt, cold, and drought stresses. Positively regulates the expression of genes involved in proline synthesis and transport, and genes involved in reactive oxygen species (ROS) scavenging such as peroxidase, superoxide dismutase and catalase during salt stress. Transactivates stress-related genes, including LEA3, RAB16A and DREB2A during salt stress. In Oryza sativa subsp. japonica (Rice), this protein is Transcription factor MYB2.